The primary structure comprises 536 residues: Suppressor of cytokine signaling 5 (536 aa).

The tract at residues 1–50 (MDKVGKMWNNFKYRCQNLFGHEGGSRSENVDMNSNRCLSVKKKNISLGDS) is required for interaction with IL4R. The segment at 115–175 (SRHAPWGGKK…SVSSRTVGSR (61 aa)) is disordered. The segment covering 158-169 (VSSVHDMDSVSS) has biased composition (low complexity). An SH2 domain is found at 381–476 (CYWGVMDRYE…FFEPLLTISL (96 aa)). An SOCS box domain is found at 471–520 (LLTISLNRTFPFSLQYICRAVICRCTTYDGIDGLPLPSMLQDFLKEYHYK).

Interacts with EGFR. Interacts with ELOB and ELOC; mediates EGFR ubiquitination and degradation. Interacts with IL4R; inhibits IL4 signaling. Post-translationally, phosphorylated. Phosphorylation is induced by EGF.

It participates in protein modification; protein ubiquitination. Its function is as follows. SOCS family proteins form part of a classical negative feedback system that regulates cytokine signal transduction. May be a substrate-recognition component of a SCF-like ECS (Elongin BC-CUL2/5-SOCS-box protein) E3 ubiquitin-protein ligase complex which mediates the ubiquitination and subsequent proteasomal degradation of target proteins. Inhibits for instance EGF signaling by mediating the degradation of the EGF receptor/EGFR. Involved in the regulation of T-helper cell differentiation by inhibiting of the IL4 signaling pathway which promotes differentiation into the Th2 phenotype. Can also partially inhibit IL6 and LIF signaling. The polypeptide is Suppressor of cytokine signaling 5 (SOCS5) (Bos taurus (Bovine)).